Reading from the N-terminus, the 529-residue chain is Bifunctional purine biosynthesis protein PurH (529 aa).

The MGS-like domain occupies 1-148; it reads MQQRRPVRRA…KNHKDVAIVV (148 aa).

Belongs to the PurH family.

The catalysed reaction is (6R)-10-formyltetrahydrofolate + 5-amino-1-(5-phospho-beta-D-ribosyl)imidazole-4-carboxamide = 5-formamido-1-(5-phospho-D-ribosyl)imidazole-4-carboxamide + (6S)-5,6,7,8-tetrahydrofolate. It carries out the reaction IMP + H2O = 5-formamido-1-(5-phospho-D-ribosyl)imidazole-4-carboxamide. Its pathway is purine metabolism; IMP biosynthesis via de novo pathway; 5-formamido-1-(5-phospho-D-ribosyl)imidazole-4-carboxamide from 5-amino-1-(5-phospho-D-ribosyl)imidazole-4-carboxamide (10-formyl THF route): step 1/1. It functions in the pathway purine metabolism; IMP biosynthesis via de novo pathway; IMP from 5-formamido-1-(5-phospho-D-ribosyl)imidazole-4-carboxamide: step 1/1. This is Bifunctional purine biosynthesis protein PurH from Salmonella heidelberg (strain SL476).